The chain runs to 490 residues: Betaine aldehyde dehydrogenase (490 aa).

K(+) is bound by residues Thr26, Ile27, and Asp93. 150 to 152 is an NAD(+) binding site; that stretch reads GAW. The active-site Charge relay system is Lys162. 176–179 lines the NAD(+) pocket; that stretch reads KPSE. Residue Val180 coordinates K(+). An NAD(+)-binding site is contributed by 230–233; the sequence is GVAS. Leu246 is a K(+) binding site. Glu252 serves as the catalytic Proton acceptor. Gly254, Cys286, and Glu387 together coordinate NAD(+). Cys286 (nucleophile) is an active-site residue. Cys286 carries the post-translational modification Cysteine sulfenic acid (-SOH). Residues Lys457 and Gly460 each contribute to the K(+) site. The active-site Charge relay system is the Glu464.

It belongs to the aldehyde dehydrogenase family. As to quaternary structure, dimer of dimers. The cofactor is K(+).

The enzyme catalyses betaine aldehyde + NAD(+) + H2O = glycine betaine + NADH + 2 H(+). The protein operates within amine and polyamine biosynthesis; betaine biosynthesis via choline pathway; betaine from betaine aldehyde: step 1/1. In terms of biological role, involved in the biosynthesis of the osmoprotectant glycine betaine. Catalyzes the irreversible oxidation of betaine aldehyde to the corresponding acid. The sequence is that of Betaine aldehyde dehydrogenase from Escherichia coli O8 (strain IAI1).